A 219-amino-acid polypeptide reads, in one-letter code: Glutathione S-transferase-like protein LUC7 (219 aa).

Residues 3–84 (PFGRLYSFMP…YLAQSGPYSE (82 aa)) form the GST N-terminal domain. A GST C-terminal domain is found at 90–219 (DAATSAKIRQ…NLIDVKRVHE (130 aa)).

The protein belongs to the GST superfamily.

Its function is as follows. Glutathione S-transferase-like protein; part of the gene cluster that mediates the biosynthesis of the mycotoxin lucilactaene and the lucilactaene-related compound NG-391 that act as cell cycle inhibitors with potent growth inhibitory activity against malarial parasites, moderate growth inhibitory activity against cancer cells, and no activity against bacteria and fungi. Within the cluster, LUC7 and LUC8 encode proteins which are not commonly involved in the biosynthesis of secondary metabolites and are not essential for lucilactaene biosynthesis. This is Glutathione S-transferase-like protein LUC7 from Fusarium sp.